The chain runs to 785 residues: Copal-8-ol diphosphate hydratase TPSSA3, chloroplastic (785 aa).

Residue R240 participates in substrate binding. D372 and D374 together coordinate Mg(2+). The DXDD motif signature appears at 372 to 375 (DIDD). R459 lines the substrate pocket.

Belongs to the terpene synthase family. Requires Mg(2+) as cofactor.

Its subcellular location is the plastid. The protein resides in the chloroplast. The enzyme catalyses (2E,6E,10E)-geranylgeranyl diphosphate + H2O = 8-hydroxycopalyl diphosphate. It participates in secondary metabolite biosynthesis; terpenoid biosynthesis. In terms of biological role, involved in the biosynthesis of labdane-type diterpenoid including sclareol, a diterpene-diol that is used as fragrance and flavoring, and has anticancer effects (able to kill leukemic and colon cancer cells by apoptosis). Sclareol can also be used as synthesis precursor of ambergris substitution fragance products such as ambrox. Terpene synthase that produces 8-hydroxycopalyl diphosphate from geranylgeranyl diphosphate (GGPP). The chain is Copal-8-ol diphosphate hydratase TPSSA3, chloroplastic from Salvia sclarea (Clary sage).